The chain runs to 360 residues: Small ribosomal subunit protein mS22 (360 aa).

The residue at position 54 (S54) is a Phosphoserine. An N6-acetyllysine modification is found at K211.

Belongs to the mitochondrion-specific ribosomal protein mS22 family. In terms of assembly, component of the mitochondrial small ribosomal subunit (mt-SSU). Mature mammalian 55S mitochondrial ribosomes consist of a small (28S) and a large (39S) subunit. The 28S small subunit contains a 12S ribosomal RNA (12S mt-rRNA) and 30 different proteins. The 39S large subunit contains a 16S rRNA (16S mt-rRNA), a copy of mitochondrial valine transfer RNA (mt-tRNA(Val)), which plays an integral structural role, and 52 different proteins.

It localises to the mitochondrion. The protein is Small ribosomal subunit protein mS22 (MRPS22) of Homo sapiens (Human).